Reading from the N-terminus, the 492-residue chain is E3 ubiquitin-protein ligase TRIM35 (492 aa).

An N-acetylmethionine modification is found at Met1. 2 positions are modified to phosphoserine: Ser4 and Ser8. The segment at 21-61 (CAVCYDPFRDAVTLRCGHNFCRGCVSRCWEVQVSPTCPVCK) adopts an RING-type zinc-finger fold. The B box-type zinc finger occupies 96-137 (RFSRVCRLHRGQLSLFCLEDKELLCCSCQADPRHQGHRVQPV). Residues Cys101, His104, Cys123, and His129 each contribute to the Zn(2+) site. Positions 210-249 (AEETRQKQLLADEKMKQLTEETEVLAHEIERLQMEMKEDD) form a coiled coil. The B30.2/SPRY domain maps to 283–486 (YLGSLQYRVW…LRICPLHISV (204 aa)).

In terms of assembly, interacts with PKM isoform M2, but not isoform M1; this interaction may compete with that between PKM and FGFR1, and hence reduces FGFR1-dependent tyrosine phosphorylation of PKM. Interacts with IRF7; this interaction promotes IRF7 proteasomal degradation. Interacts with TRAF3; this interaction promotes TRAF3 activation.

The protein localises to the cytoplasm. Its subcellular location is the nucleus. It catalyses the reaction S-ubiquitinyl-[E2 ubiquitin-conjugating enzyme]-L-cysteine + [acceptor protein]-L-lysine = [E2 ubiquitin-conjugating enzyme]-L-cysteine + N(6)-ubiquitinyl-[acceptor protein]-L-lysine.. It participates in protein modification; protein ubiquitination. E3 ubiquitin-protein ligase that participates in multiple biological processes including cell death, glucose metabolism, and in particular, the innate immune response. Mediates 'Lys-63'-linked polyubiquitination of TRAF3 thereby promoting type I interferon production via RIG-I signaling pathway. Can also catalyze 'Lys-48'-linked polyubiquitination and proteasomal degradation of viral proteins such as influenza virus PB2. Acts as a negative feedback regulator of TLR7- and TLR9-triggered signaling. Mechanistically, promotes the 'Lys-48'-linked ubiquitination of IRF7 and induces its degradation via a proteasome-dependent pathway. Reduces FGFR1-dependent tyrosine phosphorylation of PKM, inhibiting PKM-dependent lactate production, glucose metabolism, and cell growth. In Pongo abelii (Sumatran orangutan), this protein is E3 ubiquitin-protein ligase TRIM35 (TRIM35).